The sequence spans 305 residues: 4-diphosphocytidyl-2-C-methyl-D-erythritol kinase (305 aa).

Lysine 10 is a catalytic residue. Residue 95 to 105 (PVTAGLGGGSS) coordinates ATP. Aspartate 136 is a catalytic residue. The disordered stretch occupies residues 286 to 305 (PGVTPWRSPRSASSPSTKRS). Residues 290–305 (PWRSPRSASSPSTKRS) show a composition bias toward low complexity.

The protein belongs to the GHMP kinase family. IspE subfamily.

The catalysed reaction is 4-CDP-2-C-methyl-D-erythritol + ATP = 4-CDP-2-C-methyl-D-erythritol 2-phosphate + ADP + H(+). It functions in the pathway isoprenoid biosynthesis; isopentenyl diphosphate biosynthesis via DXP pathway; isopentenyl diphosphate from 1-deoxy-D-xylulose 5-phosphate: step 3/6. Functionally, catalyzes the phosphorylation of the position 2 hydroxy group of 4-diphosphocytidyl-2C-methyl-D-erythritol. The polypeptide is 4-diphosphocytidyl-2-C-methyl-D-erythritol kinase (Anaeromyxobacter sp. (strain Fw109-5)).